The chain runs to 354 residues: Short-chain dehydrogenase/reductase SAT2 (354 aa).

NADP(+)-binding residues include Ile31, Asp85, Arg201, and Val233.

It belongs to the short-chain dehydrogenases/reductases (SDR) family.

Its pathway is mycotoxin biosynthesis. Short-chain dehydrogenase/reductase; part of the satratoxin SC1 cluster involved in the biosynthesis of satratoxins, trichothecene mycotoxins that are associated with human food poisonings. Satratoxins are suggested to be made by products of multiple gene clusters (SC1, SC2 and SC3) that encode 21 proteins in all, including polyketide synthases, acetyltransferases, and other enzymes expected to modify the trichothecene skeleton. SC1 encodes 10 proteins, SAT1 to SAT10. The largest are SAT8, which encodes a putative polyketide synthase (PKS) with a conventional non-reducing architecture, and SAT10, a putative protein containing four ankyrin repeats and thus may be involved in protein scaffolding. The putative short-chain reductase SAT3 may assist the PKS in some capacity. SAT6 contains a secretory lipase domain and acts probably as a trichothecene esterase. SAT5 encodes a putative acetyltransferase, and so, with SAT6, may affect endogenous protection from toxicity. The probable transcription factor SAT9 may regulate the expression of the SC1 cluster. SC2 encodes proteins SAT11 to SAT16, the largest of which encodes the putative reducing PKS SAT13. SAT11 is a cytochrome P450 monooxygenase, while SAT14 and SAT16 are probable acetyltransferases. The SC2 cluster may be regulated by the transcription factor SAT15. SC3 is a small cluster that encodes 5 proteins, SAT17 to SAT21. SAT21 is a putative MFS-type transporter which may have a role in exporting secondary metabolites. The four other proteins putatively encoded in SC3 include the taurine hydroxylase-like protein SAT17, the O-methyltransferase SAT18, the acetyltransferase SAT19, and the Cys6-type zinc finger SAT20, the latter being probably involved in regulation of SC3 expression. The polypeptide is Short-chain dehydrogenase/reductase SAT2 (Stachybotrys chartarum (strain CBS 109288 / IBT 7711) (Toxic black mold)).